Reading from the N-terminus, the 106-residue chain is Cell division protein FtsB (106 aa).

The Cytoplasmic portion of the chain corresponds to 1 to 3 (MGK). Residues 4–21 (LTLLLLALLGWLQYSLWL) traverse the membrane as a helical segment. At 22–106 (GKNGVHDYVR…ASSSQNNLQK (85 aa)) the chain is on the periplasmic side. Residues 40–62 (QGSNAKLKARNDQLFAEIDDLNG) adopt a coiled-coil conformation.

This sequence belongs to the FtsB family. In terms of assembly, part of a complex composed of FtsB, FtsL and FtsQ.

It is found in the cell inner membrane. Essential cell division protein. May link together the upstream cell division proteins, which are predominantly cytoplasmic, with the downstream cell division proteins, which are predominantly periplasmic. The sequence is that of Cell division protein FtsB from Serratia proteamaculans (strain 568).